The following is a 508-amino-acid chain: Lysine--tRNA ligase (508 aa).

Mg(2+) is bound by residues Glu403 and Glu410.

The protein belongs to the class-II aminoacyl-tRNA synthetase family. As to quaternary structure, homodimer. The cofactor is Mg(2+).

Its subcellular location is the cytoplasm. The enzyme catalyses tRNA(Lys) + L-lysine + ATP = L-lysyl-tRNA(Lys) + AMP + diphosphate. The protein is Lysine--tRNA ligase of Methanoculleus marisnigri (strain ATCC 35101 / DSM 1498 / JR1).